The chain runs to 433 residues: 23S rRNA (uracil(1939)-C(5))-methyltransferase RlmD (433 aa).

Residues 10–68 (RTTTRQIITVSVNDLDSFGQGVARHNGKTLFIPGLLPQENAEVTVTEDKKQYARAKVVR) form the TRAM domain. The [4Fe-4S] cluster site is built by cysteine 81, cysteine 87, cysteine 90, and cysteine 162. Positions 265, 294, 299, 315, 342, and 363 each coordinate S-adenosyl-L-methionine. Cysteine 389 acts as the Nucleophile in catalysis.

This sequence belongs to the class I-like SAM-binding methyltransferase superfamily. RNA M5U methyltransferase family. RlmD subfamily.

The catalysed reaction is uridine(1939) in 23S rRNA + S-adenosyl-L-methionine = 5-methyluridine(1939) in 23S rRNA + S-adenosyl-L-homocysteine + H(+). Functionally, catalyzes the formation of 5-methyl-uridine at position 1939 (m5U1939) in 23S rRNA. In Escherichia coli O6:K15:H31 (strain 536 / UPEC), this protein is 23S rRNA (uracil(1939)-C(5))-methyltransferase RlmD.